An 802-amino-acid chain; its full sequence is MKKSIFKRYAAAVGLMASVLMFTAVPTTSNAADDQKTGKVGGFDWEMWNQNYTGTVSMNPGAGSFTCSWSGIENFLARMGKNYDDQKKNYKAFGDIVLTYDVEYTPRGNSYMCIYGWTRNPLMEYYIVEGWGDWEPPGNDGVDNFGTTTIDGKTYKIRKSMRYNQPSIEGTKTFPQYWSVRTTSGSRNNTTNYMKDQVSVTKHFDAWSKAGLDMSGTLYEVSLNIEGYRSNGSANVKSISFDGGIDIPDPEPIKPDENGYYLKENFESGEGNWSGRGSAKVKSSSGYDGTKGIFVSGREDTWNGASINLDELTFKAGETYSLGTAVMQDFESSVDFKLTLQYTDADGKENYDEVKTVTAAKGQWVDLSNSSYTIPSGATGLVLYVEVPESKTDFYMDGAYAGVKGTKPLISISSQSVDPPVTEPTNPTNPTGPSVTKWGDANCDGGVDLSDAIFIMQFLANPNKYGLTGTETNHMTNQGKVNGDVCEHGSGLTEDDAVSIQKYLIRAISELPESYLEGHDPSKTTTTTTRITTTTTTTTTTTTSKTTTTTTTTSPAMHGGYRDLGTPMNTSATMISDFRTGKAGDFFASDGWTNGKPFDCWWYKRNAVINDGCLQLSIDQKWTNDKNPDWDPRYSGGEFRTNNFYHYGYYECSMQAMKNDGVVSSFFTYTGPSDDNPWDEIDIEILGKNTTQVQFNYYTNGQGKHEKLYDLGFDSSEAYHTYGFDWQPNYIAWYVDGREVYRATQDIPKTPGKIMMNAWPGLTVDDWLKAFNGRTPLTAHYQWVTYNKNGVQHSSQGQNPWG.

Positions 1–31 are cleaved as a signal peptide; it reads MKKSIFKRYAAAVGLMASVLMFTAVPTTSNA. The GH11 domain maps to 32 to 239; that stretch reads ADDQKTGKVG…SNGSANVKSI (208 aa). The Nucleophile role is filled by Glu-124. The Proton donor role is filled by Glu-226. Residues 245–523 form a b region; that stretch reads IDIPDPEPIK…SYLEGHDPSK (279 aa). Positions 258 to 404 constitute a CBM-cenC domain; it reads NGYYLKENFE…YMDGAYAGVK (147 aa). Disordered stretches follow at residues 414–436 and 533–564; these read SQSV…PSVT and TTTT…YRDL. 2 stretches are compositionally biased toward low complexity: residues 419–436 and 533–553; these read PPVT…PSVT and TTTT…TTTT. In terms of domain architecture, Dockerin spans 434–513; it reads SVTKWGDANC…LIRAISELPE (80 aa). The interval 524-555 is linker; that stretch reads TTTTTTRITTTTTTTTTTTTSKTTTTTTTTSP. The GH16 domain maps to 556 to 792; sequence AMHGGYRDLG…WVTYNKNGVQ (237 aa). The active-site Nucleophile is the Glu-684.

This sequence in the N-terminal section; belongs to the glycosyl hydrolase 11 (cellulase G) family. The protein in the C-terminal section; belongs to the glycosyl hydrolase 16 family.

The catalysed reaction is Endohydrolysis of (1-&gt;4)-beta-D-xylosidic linkages in xylans.. It catalyses the reaction Hydrolysis of (1-&gt;4)-beta-D-glucosidic linkages in beta-D-glucans containing (1-&gt;3)- and (1-&gt;4)-bonds.. Its pathway is glycan degradation; xylan degradation. Contains two catalytic domains with xylanase and endo-beta-1,3-1,4 glucanase activities. This chain is Xylanase/beta-glucanase (xynD), found in Ruminococcus flavefaciens.